A 483-amino-acid chain; its full sequence is Protein PLASTID TRANSCRIPTIONALLY ACTIVE 14 (483 aa).

A chloroplast-targeting transit peptide spans 1–62 (MASSVSLQFL…TQPFPLFQSP (62 aa)). The region spanning 80–325 (YKIGYVRSVR…KGEEMTINYM (246 aa)) is the SET domain. S-adenosyl-L-methionine is bound at residue tyrosine 324.

The protein belongs to the class V-like SAM-binding methyltransferase superfamily. As to quaternary structure, component of the transcriptionally active chromosome (TAC) complexes. Interacts with PTAC12/HMR/PAP5 and PTAC7. Binds to SL1/MTERF3. In terms of tissue distribution, mostly expressed in leaves, flowers and seedlings, and, to a lower extent, in stems and roots.

It is found in the plastid. It localises to the chloroplast thylakoid. Essential for chloroplast development, especially for thylakoid formation. Involved in plastid gene expression, probably by maintaining plastid-encoded RNA polymerase (PEP) activity. This chain is Protein PLASTID TRANSCRIPTIONALLY ACTIVE 14, found in Arabidopsis thaliana (Mouse-ear cress).